The primary structure comprises 205 residues: Holliday junction branch migration complex subunit RuvA (205 aa).

A domain I region spans residues 1-64 (MIGKLKGLID…EDQIKLFGFR (64 aa)). Residues 65 to 143 (SDVEREWFRL…AFADVDPGVI (79 aa)) form a domain II region. Residues 144–154 (RLSGAIEDSRA) form a flexible linker region. The domain III stretch occupies residues 154-205 (APQPIADAISALINLGYGQPQAAAAIAAASRAAGDKAETAQLIRLGLKELAK).

This sequence belongs to the RuvA family. In terms of assembly, homotetramer. Forms an RuvA(8)-RuvB(12)-Holliday junction (HJ) complex. HJ DNA is sandwiched between 2 RuvA tetramers; dsDNA enters through RuvA and exits via RuvB. An RuvB hexamer assembles on each DNA strand where it exits the tetramer. Each RuvB hexamer is contacted by two RuvA subunits (via domain III) on 2 adjacent RuvB subunits; this complex drives branch migration. In the full resolvosome a probable DNA-RuvA(4)-RuvB(12)-RuvC(2) complex forms which resolves the HJ.

The protein resides in the cytoplasm. Its function is as follows. The RuvA-RuvB-RuvC complex processes Holliday junction (HJ) DNA during genetic recombination and DNA repair, while the RuvA-RuvB complex plays an important role in the rescue of blocked DNA replication forks via replication fork reversal (RFR). RuvA specifically binds to HJ cruciform DNA, conferring on it an open structure. The RuvB hexamer acts as an ATP-dependent pump, pulling dsDNA into and through the RuvAB complex. HJ branch migration allows RuvC to scan DNA until it finds its consensus sequence, where it cleaves and resolves the cruciform DNA. The protein is Holliday junction branch migration complex subunit RuvA of Bradyrhizobium sp. (strain BTAi1 / ATCC BAA-1182).